The sequence spans 1088 residues: MGKYNLILSEYLSFVYNSQSAVQIPIYYSSNSELEKRCIEFHAKCVDSSKKGLSLKSLFEEYKDVIDNATLLSILSYSYDKYNAVERKLVNYAKGKPLEADLTANEIDYENNKITSELFQSAEEYTDSLMDPAILTSLSSNLNAVMFWLERHSNDVADANKIYKRRLDLFTIVASTINKYGVPRHNEKYRYEYEVMKDKPYYLVTWANSSIEMLMSVFSHEDYLIAKELIILSYSNRSTLAKLVSSPMSILVALIDINGTFITNEELELEFSDKYIKAIVPDQIFDELQEMIDNMRKAGLVDIPRMIQEWLVDCSLEKFTLMSKIYSWSFHVGFRKQKMIDAALDQLKTEYTEDVDGEMYNEYTMLIRDEIVKMLEVPVKHDDHLLRDSELAGLLSMSSASNGESRQLKFGRKTIFSTKKNMHVMDDIAHGRYTPGVIPPVNVDRPIPLGRRDVPGRRTRIIFILPYEYFIAQHAVVEKMLSYAKHTREYAEFYSQSNQLLSYGDVTRFLSSNSMVLYTDVSQWDSSQHNTQPFRKGIIMGLDMLSNMTNDPKVVQTLNLYKQTQINLMDSYVQIPDGNVIKKIQYGAVASGEKQTKAANSIANLALIKTVLSRIANKYSFITKIIRVDGDDNYAVLQFNTDVTKQMVQDVSNDVRYIYSRMNAKVKALVSTVGIEIAKRYIAGGKIFFRAGINLLNNEKRGQSTQWDQAAILYSNYIVNKLRGFETDREFILTKIIQMTSVAITGSLRLFPSERVLTTNSTFKVFDSEDFIIEYGTTNDEVYIQRAFMSLSSQKSGIADEIASSQTFKNYVNKLSDQLLISKNVIVSKGIAVTEKAKLNSYAPVYLEKRRAQISALLTMLQKPVSFKSNKITINDILRDIKPFFVTSEANLPIQYRKFMPTLPNNVQYVIQCIGSRTYQIEDSGSKSSISKLISKYSVYKPSIEELYKVISLREQEIQLYLVSLGVPPVDASTYVGSRIYSQDKYKILESYVYNLLSINYGCYQLFDFNSPDLEKLIRIPFKGKIPAVTFILHLYAKLEIINYAIKNGAWISLFCNYPKSEMIKLWKKMWNITALRSPYTSANFFQD.

In terms of domain architecture, RdRp catalytic spans 501-687; it reads LSYGDVTRFL…AKRYIAGGKI (187 aa).

It belongs to the reoviridae RNA-directed RNA polymerase family. As to quaternary structure, interacts with VP3 (Potential). Interacts with VP2; this interaction activates VP1. Interacts with NSP5; this interaction is probably necessary for the formation of functional virus factories. Interacts with NSP2; this interaction is weak. Requires Mg(2+) as cofactor.

Its subcellular location is the virion. It catalyses the reaction RNA(n) + a ribonucleoside 5'-triphosphate = RNA(n+1) + diphosphate. Functionally, RNA-directed RNA polymerase that is involved in both transcription and genome replication. Together with VP3 capping enzyme, forms an enzyme complex positioned near the channels situated at each of the five-fold vertices of the core. Following infection, the outermost layer of the virus is lost, leaving a double-layered particle (DLP) made up of the core and VP6 shell. VP1 then catalyzes the transcription of fully conservative plus-strand genomic RNAs that are extruded through the DLP's channels into the cytoplasm where they function as mRNAs for translation of viral proteins. One copy of each of the viral (+)RNAs is also recruited during core assembly, together with newly synthesized polymerase complexes and VP2. The polymerase of these novo-formed particles catalyzes the synthesis of complementary minus-strands leading to dsRNA formation. To do so, the polymerase specifically recognizes and binds 4 bases 5'-UGUG-3' in the conserved 3'-sequence of plus-strand RNA templates. VP2 presumably activates the autoinhibited VP1-RNA complex to coordinate packaging and genome replication. Once dsRNA synthesis is complete, the polymerase switches to the transcriptional mode, thus providing secondary transcription. In Rotavirus A (isolate RVA/Human/United States/WI61/1983/G9P1A[8]) (RV-A), this protein is RNA-directed RNA polymerase.